Here is a 174-residue protein sequence, read N- to C-terminus: Co-chaperone protein HscB homolog (174 aa).

The region spanning 2 to 74 (NYFELFKFSP…IRRAEHMLSL (73 aa)) is the J domain.

It belongs to the HscB family. Interacts with HscA and stimulates its ATPase activity.

Its function is as follows. Co-chaperone involved in the maturation of iron-sulfur cluster-containing proteins. Seems to help targeting proteins to be folded toward HscA. This Shewanella baltica (strain OS185) protein is Co-chaperone protein HscB homolog.